A 344-amino-acid polypeptide reads, in one-letter code: Uroporphyrinogen decarboxylase (344 aa).

Substrate contacts are provided by residues 26-30, Phe-45, Asp-75, Tyr-151, Ser-206, and His-320; that span reads RQAGR.

This sequence belongs to the uroporphyrinogen decarboxylase family. As to quaternary structure, homodimer.

It localises to the cytoplasm. The catalysed reaction is uroporphyrinogen III + 4 H(+) = coproporphyrinogen III + 4 CO2. It functions in the pathway porphyrin-containing compound metabolism; protoporphyrin-IX biosynthesis; coproporphyrinogen-III from 5-aminolevulinate: step 4/4. Catalyzes the decarboxylation of four acetate groups of uroporphyrinogen-III to yield coproporphyrinogen-III. This is Uroporphyrinogen decarboxylase from Staphylococcus haemolyticus (strain JCSC1435).